We begin with the raw amino-acid sequence, 352 residues long: MIVDDSAIVRQVMQAILNKDPGIEVISAVADPIFAMNRMAIQWPDVIVLDIEMPRMDGVTFLRKIMAERPTPVVICSTLTDKGAETTMQALSAGAVSIVTKPKIGLKDFIQDAASDITNAVKAAAKANMSNIRAPKAAVKVREKNGVESLIPCGASAMSKTTEHVVAIGTSTGGTQALEFLLKALPTNAPGIVVVQHMPEKFTASFAERLDSICDIRVSEARHNDRVLPGHALIAPGGKHMMLKRSGAQYLVEIIDGPLVNRHKPSVDVLFRSTAKCAGKNAVGFILTGMGDDGARGLKDMLDAGAPTIAQDEKSCVVFGMPKEAIALGAAGKILPLAQIPQEIMRYAHLKD.

The region spanning 1–116 (MIVDDSAIVR…KDFIQDAASD (116 aa)) is the Response regulatory domain. 4-aspartylphosphate is present on Asp50. One can recognise a CheB-type methylesterase domain in the interval 159–351 (SKTTEHVVAI…QEIMRYAHLK (193 aa)). Active-site residues include Ser171, His197, and Asp293.

This sequence belongs to the CheB family. Post-translationally, phosphorylated by CheA. Phosphorylation of the N-terminal regulatory domain activates the methylesterase activity.

It localises to the cytoplasm. It catalyses the reaction [protein]-L-glutamate 5-O-methyl ester + H2O = L-glutamyl-[protein] + methanol + H(+). It carries out the reaction L-glutaminyl-[protein] + H2O = L-glutamyl-[protein] + NH4(+). Functionally, involved in chemotaxis. Part of a chemotaxis signal transduction system that modulates chemotaxis in response to various stimuli. Catalyzes the demethylation of specific methylglutamate residues introduced into the chemoreceptors (methyl-accepting chemotaxis proteins or MCP) by CheR. Also mediates the irreversible deamidation of specific glutamine residues to glutamic acid. This chain is Protein-glutamate methylesterase/protein-glutamine glutaminase 2, found in Shewanella denitrificans (strain OS217 / ATCC BAA-1090 / DSM 15013).